Reading from the N-terminus, the 511-residue chain is Ribonuclease Y (511 aa).

A helical transmembrane segment spans residues 3-23 (VGILIGIIILGVVGFIQYTLI). In terms of domain architecture, KH spans 201–286 (TVHVVALPND…EMVERAIKDV (86 aa)). One can recognise an HD domain in the interval 327 to 420 (VLKHSIEVSY…VQAADAISAA (94 aa)).

This sequence belongs to the RNase Y family.

The protein localises to the cell membrane. Its function is as follows. Endoribonuclease that initiates mRNA decay. In Clostridium perfringens (strain ATCC 13124 / DSM 756 / JCM 1290 / NCIMB 6125 / NCTC 8237 / Type A), this protein is Ribonuclease Y.